We begin with the raw amino-acid sequence, 476 residues long: Aspartyl/glutamyl-tRNA(Asn/Gln) amidotransferase subunit B (476 aa).

Belongs to the GatB/GatE family. GatB subfamily. In terms of assembly, heterotrimer of A, B and C subunits.

The enzyme catalyses L-glutamyl-tRNA(Gln) + L-glutamine + ATP + H2O = L-glutaminyl-tRNA(Gln) + L-glutamate + ADP + phosphate + H(+). It catalyses the reaction L-aspartyl-tRNA(Asn) + L-glutamine + ATP + H2O = L-asparaginyl-tRNA(Asn) + L-glutamate + ADP + phosphate + 2 H(+). In terms of biological role, allows the formation of correctly charged Asn-tRNA(Asn) or Gln-tRNA(Gln) through the transamidation of misacylated Asp-tRNA(Asn) or Glu-tRNA(Gln) in organisms which lack either or both of asparaginyl-tRNA or glutaminyl-tRNA synthetases. The reaction takes place in the presence of glutamine and ATP through an activated phospho-Asp-tRNA(Asn) or phospho-Glu-tRNA(Gln). The chain is Aspartyl/glutamyl-tRNA(Asn/Gln) amidotransferase subunit B from Geobacillus thermodenitrificans (strain NG80-2).